The following is a 104-amino-acid chain: Large ribosomal subunit protein bL21 (104 aa).

It belongs to the bacterial ribosomal protein bL21 family. Part of the 50S ribosomal subunit. Contacts protein L20.

This protein binds to 23S rRNA in the presence of protein L20. The chain is Large ribosomal subunit protein bL21 from Allorhizobium ampelinum (strain ATCC BAA-846 / DSM 112012 / S4) (Agrobacterium vitis (strain S4)).